Consider the following 91-residue polypeptide: MKKLVLLSAFVLLAFQVQADSIQNTDEEIKTEEQPGEENQAVSISFGDPEGYALQDAAIRRARRCPPCPSCLSCPWCPRCLRCPMCKCNPK.

A signal peptide spans 1-19 (MKKLVLLSAFVLLAFQVQA). Residues 20-65 (DSIQNTDEEIKTEEQPGEENQAVSISFGDPEGYALQDAAIRRARRC) constitute a propeptide that is removed on maturation. 6 consecutive repeat copies span residues 65–67 (CPP), 68–70 (CPS), 71–73 (CLS), 74–76 (CPW), 77–79 (CPR), and 83–85 (CPM). The interval 65–88 (CPPCPSCLSCPWCPRCLRCPMCKC) is 6 X 3 AA tandem repeats of C-P-X.

This sequence belongs to the alpha-defensin family. As to expression, paneth cells of the small bowel.

It is found in the secreted. Apparent precursor of a secreted, cationic, proline- and cysteine-rich peptide that contains Cys-Pro-Xaa repeats. Unlike cryptdin, the proposed mature peptide region lacks the structural motif characteristic of defensins. It may have microbicidal activities. This Mus musculus (Mouse) protein is Alpha-defensin-related sequence 12 (Defa-rs12).